Reading from the N-terminus, the 206-residue chain is Probable metallo-hydrolase MJ0888 (206 aa).

Zn(2+) contacts are provided by His-55, His-57, Asp-59, His-60, His-130, Asp-147, and His-190.

The protein belongs to the metallo-beta-lactamase superfamily. Requires Zn(2+) as cofactor.

This Methanocaldococcus jannaschii (strain ATCC 43067 / DSM 2661 / JAL-1 / JCM 10045 / NBRC 100440) (Methanococcus jannaschii) protein is Probable metallo-hydrolase MJ0888.